A 163-amino-acid chain; its full sequence is Nucleotide-binding protein Noca_0564 (163 aa).

Belongs to the YajQ family.

In terms of biological role, nucleotide-binding protein. The polypeptide is Nucleotide-binding protein Noca_0564 (Nocardioides sp. (strain ATCC BAA-499 / JS614)).